A 339-amino-acid chain; its full sequence is Undifferentiated embryonic cell transcription factor 1 (339 aa).

Disordered stretches follow at residues 1–62 and 144–270; these read MLLR…QRTP and MGLL…QVAP. Ser-15, Ser-18, Ser-48, and Ser-54 each carry phosphoserine. The span at 154–170 shows a compositional bias: basic residues; that stretch reads RVRRRSTGPGRPQRRGR. Composition is skewed to low complexity over residues 171–193 and 218–229; these read SSLS…PLAA and TSSPPLTSTDTL. Polar residues predominate over residues 261–270; sequence GRASSPQVAP. The interval 279–310 is leucine-zipper; it reads QTLTHLGDISTVLGPLRDQLSTLNQHVEHLRG.

Binds to the N-terminal region of ATF2. Associates with the TFIID complex through interaction with TBP. In terms of processing, phosphorylated. As to expression, expressed mainly in pluripotent cells with expression rapidly down-regulated upon cell differentiation.

It localises to the nucleus. In terms of biological role, acts as a transcriptional coactivator of ATF2. This Mus musculus (Mouse) protein is Undifferentiated embryonic cell transcription factor 1.